Here is a 654-residue protein sequence, read N- to C-terminus: Protein LYK2 (654 aa).

The signal sequence occupies residues 1-25 (MAVSVSKQYMTSLVVILLFISLSSL). Topologically, residues 26-241 (SPTSTSHSCD…PSKKKRSKMK (216 aa)) are extracellular. 3 cysteine pairs are disulfide-bonded: C50–C102, C57–C163, and C100–C161. 4 N-linked (GlcNAc...) asparagine glycosylation sites follow: N103, N170, N193, and N204. Residues 177–217 (YPVGVRDSVSSLAVRFNTTEDAIVSANNKSGVVPLKPALIP) form a LysM; degenerate repeat. The segment at 218–238 (LDHKPEKQGSRKRNPSKKKRS) is disordered. Basic residues predominate over residues 227–238 (SRKRNPSKKKRS). The helical transmembrane segment at 242–262 (LMIAVSSAIAGVCGLVTLMVF) threads the bilayer. Residues 263–654 (GYLHWKKETQ…PLVKKSSIID (392 aa)) lie on the Cytoplasmic side of the membrane. In terms of domain architecture, Protein kinase spans 324–619 (TPRKPVLEIY…EIAERVSRLV (296 aa)). Residues 330 to 338 (LEIYAFEEL) and K368 contribute to the ATP site.

This sequence belongs to the protein kinase superfamily. Ser/Thr protein kinase family.

The protein resides in the cell membrane. In terms of biological role, may recognize microbe-derived N-acetylglucosamine (NAG)-containing ligands. The polypeptide is Protein LYK2 (LYK2) (Arabidopsis thaliana (Mouse-ear cress)).